The sequence spans 570 residues: Proline--tRNA ligase (570 aa).

The protein belongs to the class-II aminoacyl-tRNA synthetase family. ProS type 1 subfamily. In terms of assembly, homodimer.

The protein localises to the cytoplasm. It catalyses the reaction tRNA(Pro) + L-proline + ATP = L-prolyl-tRNA(Pro) + AMP + diphosphate. Its function is as follows. Catalyzes the attachment of proline to tRNA(Pro) in a two-step reaction: proline is first activated by ATP to form Pro-AMP and then transferred to the acceptor end of tRNA(Pro). As ProRS can inadvertently accommodate and process non-cognate amino acids such as alanine and cysteine, to avoid such errors it has two additional distinct editing activities against alanine. One activity is designated as 'pretransfer' editing and involves the tRNA(Pro)-independent hydrolysis of activated Ala-AMP. The other activity is designated 'posttransfer' editing and involves deacylation of mischarged Ala-tRNA(Pro). The misacylated Cys-tRNA(Pro) is not edited by ProRS. The polypeptide is Proline--tRNA ligase (Syntrophomonas wolfei subsp. wolfei (strain DSM 2245B / Goettingen)).